The primary structure comprises 156 residues: Small ribosomal subunit protein uS7 (156 aa).

This sequence belongs to the universal ribosomal protein uS7 family. In terms of assembly, part of the 30S ribosomal subunit. Contacts proteins S9 and S11.

In terms of biological role, one of the primary rRNA binding proteins, it binds directly to 16S rRNA where it nucleates assembly of the head domain of the 30S subunit. Is located at the subunit interface close to the decoding center, probably blocks exit of the E-site tRNA. The sequence is that of Small ribosomal subunit protein uS7 from Deinococcus deserti (strain DSM 17065 / CIP 109153 / LMG 22923 / VCD115).